Here is a 393-residue protein sequence, read N- to C-terminus: MNDVFLKALPVLQKLTTAGFEAYFVGGSVRDYLLNRTISDVDIATSAFPEEVKEIFQTSYDTGIAHGTVTVRENNEFYEVTTFRTEGTYEDFRRPSEVTFIRSLEEDLKRRDFTMNAIAMDEHFALQDPFSGQLAIQNKEIKAVGKASERFHEDALRMMRAVRFLSQLDFELDKETEKALESQIELLQHTSVERITVEWLKMMKGKAAKRAIELLLKVKMETYLPGLKDEKSALSEFASWDWEKRTTEESIWLGLVVAVKPNNVNAFLKAWKLPNKTIQLVNKAYQYALNMKETWLTEELYHAGKAVFSLVNELNVIRGQENNQHKVSQAYEALPIHSKKDLAITGADLLKWSGESAGPWVKETLDKVECGVLSNEINNEKIQIKRWLGYHEE.

Glycine 27 and arginine 30 together coordinate ATP. Residues glycine 27 and arginine 30 each contribute to the CTP site. Aspartate 40 and aspartate 42 together coordinate Mg(2+). ATP is bound by residues arginine 111, aspartate 154, arginine 157, arginine 160, and arginine 163. CTP-binding residues include arginine 111, aspartate 154, arginine 157, arginine 160, and arginine 163.

The protein belongs to the tRNA nucleotidyltransferase/poly(A) polymerase family. Bacterial CCA-adding enzyme type 3 subfamily. As to quaternary structure, homodimer. It depends on Mg(2+) as a cofactor.

The catalysed reaction is a tRNA precursor + 2 CTP + ATP = a tRNA with a 3' CCA end + 3 diphosphate. It carries out the reaction a tRNA with a 3' CCA end + 2 CTP + ATP = a tRNA with a 3' CCACCA end + 3 diphosphate. Its function is as follows. Catalyzes the addition and repair of the essential 3'-terminal CCA sequence in tRNAs without using a nucleic acid template. Adds these three nucleotides in the order of C, C, and A to the tRNA nucleotide-73, using CTP and ATP as substrates and producing inorganic pyrophosphate. tRNA 3'-terminal CCA addition is required both for tRNA processing and repair. Also involved in tRNA surveillance by mediating tandem CCA addition to generate a CCACCA at the 3' terminus of unstable tRNAs. While stable tRNAs receive only 3'-terminal CCA, unstable tRNAs are marked with CCACCA and rapidly degraded. The protein is CCA-adding enzyme of Listeria monocytogenes serotype 4b (strain CLIP80459).